The chain runs to 125 residues: Large ribosomal subunit protein bL12 (125 aa).

The protein belongs to the bacterial ribosomal protein bL12 family. Homodimer. Part of the ribosomal stalk of the 50S ribosomal subunit. Forms a multimeric L10(L12)X complex, where L10 forms an elongated spine to which 2 to 4 L12 dimers bind in a sequential fashion. Binds GTP-bound translation factors.

Functionally, forms part of the ribosomal stalk which helps the ribosome interact with GTP-bound translation factors. Is thus essential for accurate translation. The polypeptide is Large ribosomal subunit protein bL12 (Methylorubrum extorquens (strain CM4 / NCIMB 13688) (Methylobacterium extorquens)).